Here is a 365-residue protein sequence, read N- to C-terminus: tRNA(Met) cytidine acetate ligase (365 aa).

ATP-binding positions include 7-20, glycine 96, asparagine 152, and arginine 175; that span reads IAEFNPFHNGHKYL.

This sequence belongs to the TmcAL family.

It localises to the cytoplasm. It carries out the reaction cytidine(34) in elongator tRNA(Met) + acetate + ATP = N(4)-acetylcytidine(34) in elongator tRNA(Met) + AMP + diphosphate. In terms of biological role, catalyzes the formation of N(4)-acetylcytidine (ac(4)C) at the wobble position of elongator tRNA(Met), using acetate and ATP as substrates. First activates an acetate ion to form acetyladenylate (Ac-AMP) and then transfers the acetyl group to tRNA to form ac(4)C34. The polypeptide is tRNA(Met) cytidine acetate ligase (Streptococcus pneumoniae serotype 4 (strain ATCC BAA-334 / TIGR4)).